Reading from the N-terminus, the 90-residue chain is Acylphosphatase (90 aa).

Residues 4–90 form the Acylphosphatase-like domain; sequence CVRVRVSGRV…KGHDDFKIIY (87 aa). Catalysis depends on residues R19 and N37.

The protein belongs to the acylphosphatase family.

The enzyme catalyses an acyl phosphate + H2O = a carboxylate + phosphate + H(+). The chain is Acylphosphatase (acyP) from Methanothrix thermoacetophila (strain DSM 6194 / JCM 14653 / NBRC 101360 / PT) (Methanosaeta thermophila).